Reading from the N-terminus, the 207-residue chain is Ion-translocating oxidoreductase complex subunit B (207 aa).

Positions 1 to 29 are hydrophobic; that stretch reads MLDLSIIAYLLIAICLIALIFGALLGYFS. Residues 35–93 enclose the 4Fe-4S domain; that stretch reads EADPIVDQIDAILPQSQCGQCGYPGCKPYAEAIANGDQITKCVPGGQPLVVKIAELMGV. The [4Fe-4S] cluster site is built by Cys52, Cys55, Cys60, Cys76, Cys116, Cys119, Cys122, Cys126, Cys146, Cys149, Cys152, and Cys156. 4Fe-4S ferredoxin-type domains are found at residues 107 to 136 and 137 to 166; these read KVAL…GTNK and AMHT…MIKV.

This sequence belongs to the 4Fe4S bacterial-type ferredoxin family. RnfB subfamily. The complex is composed of six subunits: RnfA, RnfB, RnfC, RnfD, RnfE and RnfG. [4Fe-4S] cluster serves as cofactor.

The protein localises to the cell inner membrane. Functionally, part of a membrane-bound complex that couples electron transfer with translocation of ions across the membrane. The polypeptide is Ion-translocating oxidoreductase complex subunit B (Haemophilus ducreyi (strain 35000HP / ATCC 700724)).